A 396-amino-acid polypeptide reads, in one-letter code: Cyclic GMP-AMP synthase-like receptor (396 aa).

ATP is bound by residues Ser63 and 75 to 77 (EFD). The Mg(2+) site is built by Glu75, Asp77, and Asp194. Asp194 contacts GTP. ATP contacts are provided by residues 241–244 (QEQE), Lys262, and 275–279 (SYYLK). Mn(2+) contacts are provided by Val286, Glu287, and Asp292. Residues 376 to 396 (IMNGGNPQQSANAENGSCLSM) are disordered. Residues 380 to 396 (GNPQQSANAENGSCLSM) are compositionally biased toward polar residues.

Belongs to the mab-21 family. It depends on Mg(2+) as a cofactor. The cofactor is Mn(2+).

The enzyme catalyses GTP + ATP = 2',3'-cGAMP + 2 diphosphate. The catalysed reaction is GTP + ATP = pppGp(2'-5')A + diphosphate. It carries out the reaction pppGp(2'-5')A = 2',3'-cGAMP + diphosphate. Nucleotidyltransferase that catalyzes the formation of cyclic GMP-AMP (2',3'-cGAMP) from ATP and GTP and plays a key role in innate immunity. Acts as a key sensor of double-stranded RNA (dsRNA), the presence of dsRNA in the cytoplasm being a danger signal that triggers the immune responses. Directly binds dsRNA, activating the nucleotidyltransferase activity, leading to synthesis of 2',3'-cGAMP, a second messenger that binds to and activates Sting, thereby triggering the immune response via activation of the NF-kappa-B transcription factor. The polypeptide is Cyclic GMP-AMP synthase-like receptor (Aethina tumida (Small hive beetle)).